The chain runs to 68 residues: MSTKTNIQKDWEQREFIEDMSINIQKIVEFLNKFELSTRNKLSDLNEKLTILDRQVDYLEATFKTVQE.

A coiled-coil region spans residues 37–62; it reads STRNKLSDLNEKLTILDRQVDYLEAT.

It belongs to the BRK1 family. As to quaternary structure, part of a Scar/WAVE complex containing brk1, scrA, abiA, pirA and napA. Interacts with scrA.

Its subcellular location is the cytoplasm. The protein resides in the cytoskeleton. Its function is as follows. Involved in regulation of actin and microtubule organization. This Dictyostelium discoideum (Social amoeba) protein is Protein BRICK1 (brk1).